A 303-amino-acid polypeptide reads, in one-letter code: Probable alpha-L-glutamate ligase (303 aa).

Residues 104–287 (LQLLAREGID…IAGMMIEFIE (184 aa)) enclose the ATP-grasp domain. ATP contacts are provided by residues lysine 141, 178-179 (EY), aspartate 187, and 211-213 (RSN). 3 residues coordinate Mg(2+): aspartate 248, glutamate 260, and asparagine 262. Aspartate 248, glutamate 260, and asparagine 262 together coordinate Mn(2+).

Belongs to the RimK family. The cofactor is Mg(2+). It depends on Mn(2+) as a cofactor.

This Pectobacterium carotovorum subsp. carotovorum (strain PC1) protein is Probable alpha-L-glutamate ligase.